We begin with the raw amino-acid sequence, 241 residues long: Chaperone protein FimC (241 aa).

The N-terminal stretch at 1 to 36 is a signal peptide; sequence MSNKNVNVRKSQEITFCLLAGILMFMAMMVAGRAEA.

This sequence belongs to the periplasmic pilus chaperone family.

It localises to the periplasm. In terms of biological role, required for the biogenesis of type 1 fimbriae. Binds and interact with FimH. The polypeptide is Chaperone protein FimC (fimC) (Escherichia coli (strain K12)).